The sequence spans 695 residues: Lasso peptide isopeptidase AtxE2 (695 aa).

Residues 1–30 (MRSSKIRCPGAIRVGTLVTAFGCLPHVAFA) form the signal peptide. 2 cysteine pairs are disulfide-bonded: Cys-296-Cys-301 and Cys-354-Cys-363. Ser-527 serves as the catalytic Nucleophile. Cys-551 and Cys-552 are oxidised to a cystine. Catalysis depends on charge relay system residues Glu-610 and His-638.

The protein resides in the cytoplasm. In terms of biological role, lasso peptide isopeptidase that specifically hydrolyzes Astexin-2 and Astexin-3, converting them to linear peptides. Has only a few specific contacts with substrates, because it recognizes Astexin knotted structure (principally the loop structure). Its binding to lasso peptides opens them to expose the isopeptide bonds for hydrolysis. This is Lasso peptide isopeptidase AtxE2 from Asticcacaulis excentricus (strain ATCC 15261 / DSM 4724 / KCTC 12464 / NCIMB 9791 / VKM B-1370 / CB 48).